The primary structure comprises 694 residues: DNA primase (694 aa).

The CHC2-type zinc finger occupies 41-65; the sequence is CPFHDDKSPSFTVSPAKQFYYCFSC. The 84-residue stretch at 265–348 folds into the Toprim domain; the sequence is DQAVVVEGYF…QGQVQLRVLN (84 aa). Mg(2+) is bound by residues glutamate 271, aspartate 317, and aspartate 319.

This sequence belongs to the DnaG primase family. As to quaternary structure, monomer. Interacts with DnaB. It depends on Zn(2+) as a cofactor. The cofactor is Mg(2+).

It carries out the reaction ssDNA + n NTP = ssDNA/pppN(pN)n-1 hybrid + (n-1) diphosphate.. Functionally, RNA polymerase that catalyzes the synthesis of short RNA molecules used as primers for DNA polymerase during DNA replication. The polypeptide is DNA primase (Synechococcus elongatus (strain ATCC 33912 / PCC 7942 / FACHB-805) (Anacystis nidulans R2)).